The primary structure comprises 397 residues: Phosphoglycerate kinase (397 aa).

Substrate contacts are provided by residues 25–27 (DLN), Arg-41, 64–67 (HLGR), Arg-118, and Arg-151. ATP is bound by residues Lys-202, Glu-324, and 350–353 (GGDT).

This sequence belongs to the phosphoglycerate kinase family. As to quaternary structure, monomer.

It is found in the cytoplasm. It catalyses the reaction (2R)-3-phosphoglycerate + ATP = (2R)-3-phospho-glyceroyl phosphate + ADP. The protein operates within carbohydrate degradation; glycolysis; pyruvate from D-glyceraldehyde 3-phosphate: step 2/5. In Acidovorax sp. (strain JS42), this protein is Phosphoglycerate kinase.